The primary structure comprises 156 residues: Ribosomal RNA large subunit methyltransferase H (156 aa).

Residues L73, G104, and 123–128 (LSALTL) each bind S-adenosyl-L-methionine.

Belongs to the RNA methyltransferase RlmH family. As to quaternary structure, homodimer.

It is found in the cytoplasm. The enzyme catalyses pseudouridine(1915) in 23S rRNA + S-adenosyl-L-methionine = N(3)-methylpseudouridine(1915) in 23S rRNA + S-adenosyl-L-homocysteine + H(+). Specifically methylates the pseudouridine at position 1915 (m3Psi1915) in 23S rRNA. This is Ribosomal RNA large subunit methyltransferase H from Shewanella putrefaciens (strain CN-32 / ATCC BAA-453).